The chain runs to 498 residues: ATP synthase subunit beta, chloroplastic (498 aa).

At T6 the chain carries Phosphothreonine. Position 13 is a phosphoserine (S13). 172–179 (GGAGVGKT) is a binding site for ATP.

Belongs to the ATPase alpha/beta chains family. F-type ATPases have 2 components, CF(1) - the catalytic core - and CF(0) - the membrane proton channel. CF(1) has five subunits: alpha(3), beta(3), gamma(1), delta(1), epsilon(1). CF(0) has four main subunits: a(1), b(1), b'(1) and c(9-12).

It localises to the plastid. The protein localises to the chloroplast thylakoid membrane. It carries out the reaction ATP + H2O + 4 H(+)(in) = ADP + phosphate + 5 H(+)(out). In terms of biological role, produces ATP from ADP in the presence of a proton gradient across the membrane. The catalytic sites are hosted primarily by the beta subunits. This Nasturtium officinale (Watercress) protein is ATP synthase subunit beta, chloroplastic.